The primary structure comprises 417 residues: MSYKIKDLSLASEGKKQIEWAERHMPTLMEIRKRFKAEKPLKGINISAVLHVTKETAALVKTLKIGGANVALAGSNPLSTQDDVAAALVEEGISVFAWKGENETEYYSNIESIVKIHEPNIVMDDGADLHAYIHEKVSSKLDIYGGTEETTTGVIRLKAMEKDGVLKYPLVAVNNAYTKYLFDNRYGTGQSAIDGILRATNILIAGKIAVVAGYGWVGRGIANRLRGMGARVIVTEVDPIRALEAVMDGFDVMPIAEASKVGDIFVTATGNTKAIRVEHMLNMKDGAILSNAGHFNVEVDVKGLKETAVKVRNIRPYVDEYTLPNGKRVYLLADGRLVNLAAAEGHPSEVMDMSFANQALAVEYLVKNRGKLEKKVYNMPMELDYEVARIKLKSMGIQIDELTEEQKEYLEQWKSGT.

Positions 53, 125, and 149 each coordinate substrate. Position 150–152 (150–152 (TTT)) interacts with NAD(+). Lysine 179 and aspartate 183 together coordinate substrate. NAD(+) contacts are provided by residues asparagine 184, 213–218 (GYGWVG), glutamate 236, asparagine 271, 292–294 (AGH), and asparagine 339.

It belongs to the adenosylhomocysteinase family. The cofactor is NAD(+).

Its subcellular location is the cytoplasm. It carries out the reaction S-adenosyl-L-homocysteine + H2O = L-homocysteine + adenosine. It participates in amino-acid biosynthesis; L-homocysteine biosynthesis; L-homocysteine from S-adenosyl-L-homocysteine: step 1/1. Functionally, may play a key role in the regulation of the intracellular concentration of adenosylhomocysteine. In Saccharolobus solfataricus (strain ATCC 35092 / DSM 1617 / JCM 11322 / P2) (Sulfolobus solfataricus), this protein is Adenosylhomocysteinase.